The following is a 39-amino-acid chain: MTESGRIPLWLVATVAGMGVITLLGIFFYGAYAGLGSAV.

The helical transmembrane segment at 7-27 (IPLWLVATVAGMGVITLLGIF) threads the bilayer.

This sequence belongs to the PsbJ family. PSII is composed of 1 copy each of membrane proteins PsbA, PsbB, PsbC, PsbD, PsbE, PsbF, PsbH, PsbI, PsbJ, PsbK, PsbL, PsbM, PsbT, PsbX, PsbY, PsbZ, Psb30/Ycf12, peripheral proteins PsbO, CyanoQ (PsbQ), PsbU, PsbV and a large number of cofactors. It forms dimeric complexes.

It is found in the cellular thylakoid membrane. In terms of biological role, one of the components of the core complex of photosystem II (PSII). PSII is a light-driven water:plastoquinone oxidoreductase that uses light energy to abstract electrons from H(2)O, generating O(2) and a proton gradient subsequently used for ATP formation. It consists of a core antenna complex that captures photons, and an electron transfer chain that converts photonic excitation into a charge separation. The chain is Photosystem II reaction center protein J from Cyanothece sp. (strain PCC 7425 / ATCC 29141).